The primary structure comprises 314 residues: MRIIYFGTPEFSRIILERISPYLNIIAVVTQPDKPKGRGKRIMCSPVKDFAISKGIPVYQPEKLKGNKEFFEIIRSLNPEALVVASYGKIIPEDILNIPPYGGINVHASVLPKYRGAAPIERAIMNCEKETGVSIMKMERGLDTGPVYAIRKIPILPDDNRGTLSIKLAHLGAELLLEVLPLIKDGKLSPVPQEESLATYAPKLSKEEEIIDWNMRGEKIWCQIRALSPEPGAMTFFRGKILKIFKADFEEKIFNEEIINGTIIEQNKKRGIGVKVNNGILWLLELQPEGKKRMSFLEFMNGYRLNIGERFENS.

109–112 lines the (6S)-5,6,7,8-tetrahydrofolate pocket; it reads SVLP.

Belongs to the Fmt family.

The catalysed reaction is L-methionyl-tRNA(fMet) + (6R)-10-formyltetrahydrofolate = N-formyl-L-methionyl-tRNA(fMet) + (6S)-5,6,7,8-tetrahydrofolate + H(+). Attaches a formyl group to the free amino group of methionyl-tRNA(fMet). The formyl group appears to play a dual role in the initiator identity of N-formylmethionyl-tRNA by promoting its recognition by IF2 and preventing the misappropriation of this tRNA by the elongation apparatus. This Dictyoglomus turgidum (strain DSM 6724 / Z-1310) protein is Methionyl-tRNA formyltransferase.